A 197-amino-acid polypeptide reads, in one-letter code: dITP/XTP pyrophosphatase (197 aa).

Thr-8–Lys-13 lines the substrate pocket. Glu-40 and Asp-69 together coordinate Mg(2+). Asp-69 (proton acceptor) is an active-site residue. Residues Ser-70, Phe-154–Asp-157, Lys-177, and His-182–Arg-183 contribute to the substrate site.

Belongs to the HAM1 NTPase family. In terms of assembly, homodimer. Mg(2+) is required as a cofactor.

The catalysed reaction is XTP + H2O = XMP + diphosphate + H(+). It carries out the reaction dITP + H2O = dIMP + diphosphate + H(+). The enzyme catalyses ITP + H2O = IMP + diphosphate + H(+). Pyrophosphatase that catalyzes the hydrolysis of nucleoside triphosphates to their monophosphate derivatives, with a high preference for the non-canonical purine nucleotides XTP (xanthosine triphosphate), dITP (deoxyinosine triphosphate) and ITP. Seems to function as a house-cleaning enzyme that removes non-canonical purine nucleotides from the nucleotide pool, thus preventing their incorporation into DNA/RNA and avoiding chromosomal lesions. This Salmonella paratyphi A (strain ATCC 9150 / SARB42) protein is dITP/XTP pyrophosphatase (rdgB).